A 356-amino-acid polypeptide reads, in one-letter code: Nuclear hormone receptor family member nhr-42 (356 aa).

The nuclear receptor DNA-binding region spans 7 to 82 (SQTCLICGDS…VGMRESAVLS (76 aa)). The NR C4-type zinc-finger motif lies at 10–30 (CLICGDSADSLHFGALSCRAC). The NR C4-type; atypical zinc finger occupies 48 to 70 (CDRQCKVDTGMRKLCASCRYDKC). Positions 108-356 (TSDSVLENLQ…HSSIFGNMAE (249 aa)) constitute an NR LBD domain.

Belongs to the nuclear hormone receptor family.

It localises to the nucleus. Functionally, orphan nuclear receptor. This Caenorhabditis elegans protein is Nuclear hormone receptor family member nhr-42 (nhr-42).